The chain runs to 321 residues: Dolichyl N-acetyl-alpha-D-glucosaminyl phosphate 3-beta-D-2,3-diacetamido-2,3-dideoxy-beta-D-glucuronosyltransferase (321 aa).

Transmembrane regions (helical) follow at residues 252 to 272 and 290 to 310; these read FGFLFMLLSIIITGLLIFIYI and LYIALPILLFLFHCLISYGFF.

Belongs to the glycosyltransferase 2 family.

The protein localises to the cell membrane. The catalysed reaction is an archaeal dolichyl N-acetyl-alpha-D-glucosaminyl phosphate + UDP-2,3-diacetamido-2,3-dideoxy-alpha-D-glucuronate = an archaeal dolichyl 3-O-(2,3-diacetamido-2,3-dideoxy- beta-D-glucuronosyl)-N-acetyl- alpha-D-glucosaminyl phosphate + UDP + H(+). It participates in cell surface structure biogenesis; S-layer biogenesis. The protein operates within protein modification; protein glycosylation. Functionally, involved in the assembly of an N-linked disaccharide that decorates the S-layer glycoprotein and flagellins. AglC catalyzes the transfer of 2,3-diacetamido-2,3-dideoxy-alpha-D-glucuronic acid (Glc-2,3-diNAcA) from uridine 5'-diphospho 2,3-diacetamido-2,3-dideoxy-alpha-D-glucuronic acid (UDP-Glc-2,3-diNAcA) to the AglK product Dol-P-GlcNAc to yield Dol-P-GlcNAc-Glc-2,3-diNAcA. AglC is specific for the monophosphate-linked Dol-P-GlcNAc. This is Dolichyl N-acetyl-alpha-D-glucosaminyl phosphate 3-beta-D-2,3-diacetamido-2,3-dideoxy-beta-D-glucuronosyltransferase from Methanococcus voltae.